A 214-amino-acid chain; its full sequence is Cdc42 effector protein 2 (214 aa).

Ser2 carries the post-translational modification N-acetylserine. Residues Ile30–Gly44 form the CRIB domain. Ser31, Ser101, Ser137, Ser141, and Ser145 each carry phosphoserine. Positions Ala118–Asn151 are disordered.

The protein belongs to the BORG/CEP family. Interacts with CDC42 and RHOQ, in a GTP-dependent manner, and with SEPT7.

The protein localises to the endomembrane system. It localises to the cytoplasm. The protein resides in the cytoskeleton. In terms of biological role, probably involved in the organization of the actin cytoskeleton. May act downstream of CDC42 to induce actin filament assembly leading to cell shape changes. Induces pseudopodia formation in fibroblasts in a CDC42-dependent manner. This chain is Cdc42 effector protein 2 (Cdc42ep2), found in Rattus norvegicus (Rat).